Consider the following 173-residue polypeptide: Protein-export protein SecB (173 aa).

Belongs to the SecB family. Homotetramer, a dimer of dimers. One homotetramer interacts with 1 SecA dimer.

It is found in the cytoplasm. Its function is as follows. One of the proteins required for the normal export of preproteins out of the cell cytoplasm. It is a molecular chaperone that binds to a subset of precursor proteins, maintaining them in a translocation-competent state. It also specifically binds to its receptor SecA. In Ralstonia nicotianae (strain ATCC BAA-1114 / GMI1000) (Ralstonia solanacearum), this protein is Protein-export protein SecB.